Consider the following 565-residue polypeptide: Oxygen-dependent choline dehydrogenase (565 aa).

7–36 (DYIICGAGSAGNVLATRLTEDPGVTVLLLE) is an FAD binding site. The active-site Proton acceptor is the His-474.

It belongs to the GMC oxidoreductase family. FAD serves as cofactor.

The catalysed reaction is choline + A = betaine aldehyde + AH2. The enzyme catalyses betaine aldehyde + NAD(+) + H2O = glycine betaine + NADH + 2 H(+). The protein operates within amine and polyamine biosynthesis; betaine biosynthesis via choline pathway; betaine aldehyde from choline (cytochrome c reductase route): step 1/1. Involved in the biosynthesis of the osmoprotectant glycine betaine. Catalyzes the oxidation of choline to betaine aldehyde and betaine aldehyde to glycine betaine at the same rate. The polypeptide is Oxygen-dependent choline dehydrogenase (Burkholderia pseudomallei (strain 1710b)).